The chain runs to 241 residues: Probable transcriptional regulatory protein LHK_02347 (241 aa).

The protein belongs to the TACO1 family.

It localises to the cytoplasm. The protein is Probable transcriptional regulatory protein LHK_02347 of Laribacter hongkongensis (strain HLHK9).